A 429-amino-acid polypeptide reads, in one-letter code: MTAIAVVGSQWGDEGKGKITDFLSKDAAMAVRSNGGNNAGHTIEIGDKTFKMRLIPSGIFAAKKGAVIGNGVVINPEVMFGELDNLEKEGIDISGLKISNRAHVIMPYHILQDTYQEEAKGDKKIGTTKNGIGPCYMDKASRIGIRVCDLLERDTFEEKLRTNLAEKNALFTKVYNKPALKFEDIFEKYLEYGQKMKKYVTDTSVVVNDALDKNEKVLFEGAQGVMLDIDEGTYPYVTSSNTISGGIASGIGMGANRLNTVIGVCKAYTTRVGEGPFPTELLDEVGDRIRETAHEYGTVTGRPRRVGWFDSVALRHAKRVAGINALSLNLLDVFSGFDKIKIATAYELDGKKIDYYPASLKELYRCKPVYEELPAWDEDITNVKTWEDLPENAKKFLNRVSELVGVPLVTVSVGPDREQTIVLKNPWEM.

GTP-binding positions include 12–18 and 40–42; these read GDEGKGK and GHT. D13 acts as the Proton acceptor in catalysis. Mg(2+)-binding residues include D13 and G40. Residues 13-16, 38-41, T128, R142, Q223, T238, and R302 each bind IMP; these read DEGK and NAGH. The active-site Proton donor is H41. 298 to 304 contributes to the substrate binding site; it reads TVTGRPR. GTP contacts are provided by residues R304, 330 to 332, and 412 to 414; these read LLD and SVG.

It belongs to the adenylosuccinate synthetase family. In terms of assembly, homodimer. It depends on Mg(2+) as a cofactor.

The protein resides in the cytoplasm. The enzyme catalyses IMP + L-aspartate + GTP = N(6)-(1,2-dicarboxyethyl)-AMP + GDP + phosphate + 2 H(+). Its pathway is purine metabolism; AMP biosynthesis via de novo pathway; AMP from IMP: step 1/2. Its function is as follows. Plays an important role in the de novo pathway of purine nucleotide biosynthesis. Catalyzes the first committed step in the biosynthesis of AMP from IMP. The protein is Adenylosuccinate synthetase of Lactobacillus gasseri (strain ATCC 33323 / DSM 20243 / BCRC 14619 / CIP 102991 / JCM 1131 / KCTC 3163 / NCIMB 11718 / NCTC 13722 / AM63).